We begin with the raw amino-acid sequence, 600 residues long: Xylulose kinase (600 aa).

79-82 (WLEA) provides a ligand contact to substrate. Ser-244 carries the phosphoserine modification. Asp-299 contributes to the substrate binding site. ATP contacts are provided by residues Gly-358 and 505–509 (GASKN).

The protein belongs to the FGGY kinase family.

The protein resides in the cytoplasm. It catalyses the reaction D-xylulose + ATP = D-xylulose 5-phosphate + ADP + H(+). Its function is as follows. Xylulose kinase necessary for growth in culture media with D-xylulose as the solecarbon source. The sequence is that of Xylulose kinase from Saccharomyces cerevisiae (strain ATCC 204508 / S288c) (Baker's yeast).